The sequence spans 192 residues: Peptidyl-tRNA hydrolase (192 aa).

Residue Y17 participates in tRNA binding. The Proton acceptor role is filled by H22. The tRNA site is built by F68, N70, and N116.

Belongs to the PTH family. In terms of assembly, monomer.

It localises to the cytoplasm. It carries out the reaction an N-acyl-L-alpha-aminoacyl-tRNA + H2O = an N-acyl-L-amino acid + a tRNA + H(+). Its function is as follows. Hydrolyzes ribosome-free peptidyl-tRNAs (with 1 or more amino acids incorporated), which drop off the ribosome during protein synthesis, or as a result of ribosome stalling. Functionally, catalyzes the release of premature peptidyl moieties from peptidyl-tRNA molecules trapped in stalled 50S ribosomal subunits, and thus maintains levels of free tRNAs and 50S ribosomes. This chain is Peptidyl-tRNA hydrolase, found in Hydrogenovibrio crunogenus (strain DSM 25203 / XCL-2) (Thiomicrospira crunogena).